We begin with the raw amino-acid sequence, 263 residues long: S-adenosylmethionine decarboxylase proenzyme (263 aa).

S113 (schiff-base intermediate with substrate; via pyruvic acid) is an active-site residue. Position 113 is a pyruvic acid (Ser); by autocatalysis (S113). Catalysis depends on H118, which acts as the Proton acceptor; for processing activity. C141 serves as the catalytic Proton donor; for catalytic activity.

Belongs to the prokaryotic AdoMetDC family. Type 2 subfamily. In terms of assembly, heterooctamer of four alpha and four beta chains arranged as a tetramer of alpha/beta heterodimers. It depends on pyruvate as a cofactor. Post-translationally, is synthesized initially as an inactive proenzyme. Formation of the active enzyme involves a self-maturation process in which the active site pyruvoyl group is generated from an internal serine residue via an autocatalytic post-translational modification. Two non-identical subunits are generated from the proenzyme in this reaction, and the pyruvate is formed at the N-terminus of the alpha chain, which is derived from the carboxyl end of the proenzyme. The post-translation cleavage follows an unusual pathway, termed non-hydrolytic serinolysis, in which the side chain hydroxyl group of the serine supplies its oxygen atom to form the C-terminus of the beta chain, while the remainder of the serine residue undergoes an oxidative deamination to produce ammonia and the pyruvoyl group blocking the N-terminus of the alpha chain.

The enzyme catalyses S-adenosyl-L-methionine + H(+) = S-adenosyl 3-(methylsulfanyl)propylamine + CO2. The protein operates within amine and polyamine biosynthesis; S-adenosylmethioninamine biosynthesis; S-adenosylmethioninamine from S-adenosyl-L-methionine: step 1/1. In terms of biological role, catalyzes the decarboxylation of S-adenosylmethionine to S-adenosylmethioninamine (dcAdoMet), the propylamine donor required for the synthesis of the polyamines spermine and spermidine from the diamine putrescine. This chain is S-adenosylmethionine decarboxylase proenzyme, found in Marinobacter nauticus (strain ATCC 700491 / DSM 11845 / VT8) (Marinobacter aquaeolei).